The chain runs to 556 residues: Oxygen-dependent choline dehydrogenase (556 aa).

Residue 6–35 (DYIIIGAGSAGNVLAARLTEDPGVTVLLLE) coordinates FAD. The active-site Proton acceptor is the H475.

Belongs to the GMC oxidoreductase family. FAD serves as cofactor.

It catalyses the reaction choline + A = betaine aldehyde + AH2. The catalysed reaction is betaine aldehyde + NAD(+) + H2O = glycine betaine + NADH + 2 H(+). It participates in amine and polyamine biosynthesis; betaine biosynthesis via choline pathway; betaine aldehyde from choline (cytochrome c reductase route): step 1/1. Functionally, involved in the biosynthesis of the osmoprotectant glycine betaine. Catalyzes the oxidation of choline to betaine aldehyde and betaine aldehyde to glycine betaine at the same rate. This is Oxygen-dependent choline dehydrogenase from Xanthomonas euvesicatoria pv. vesicatoria (strain 85-10) (Xanthomonas campestris pv. vesicatoria).